The chain runs to 137 residues: Proofreading thioesterase EntH (137 aa).

The active-site Nucleophile or proton acceptor is the E63.

The protein belongs to the thioesterase PaaI family. In terms of assembly, homotetramer. Dimer of dimers. Interacts specifically with the aryl carrier protein (ArCP) domain of EntB.

Its subcellular location is the cytoplasm. Its pathway is siderophore biosynthesis; enterobactin biosynthesis. In terms of biological role, required for optimal enterobactin synthesis. Acts as a proofreading enzyme that prevents EntB misacylation by hydrolyzing the thioester bound existing between EntB and wrongly charged molecules. This Salmonella typhimurium (strain LT2 / SGSC1412 / ATCC 700720) protein is Proofreading thioesterase EntH.